The primary structure comprises 402 residues: uncharacterized protein (402 aa).

The protein belongs to the peptidase M20 family.

This is an uncharacterized protein from Sinorhizobium fredii (strain NBRC 101917 / NGR234).